A 683-amino-acid chain; its full sequence is Bifunctional lysine-specific demethylase and histidyl-hydroxylase NO66 (683 aa).

The span at 1–26 shows a compositional bias: polar residues; the sequence is MHKASTSSANRANFQGNHKTQKSPNN. 2 disordered regions span residues 1–162 and 179–208; these read MHKA…SPIQ and AAGA…AAKS. Over residues 54 to 65 the composition is skewed to basic and acidic residues; sequence LTKEQKERRKMM. Polar residues predominate over residues 85–94; it reads IDTSASTSNK. Residues 95–108 show a composition bias toward basic residues; that stretch reads GKSKAARPTDRKRR. Low complexity predominate over residues 116–125; that stretch reads PADANNNNTK. Residue Ser-152 is modified to Phosphoserine. Thr-158 bears the Phosphothreonine mark. Ser-159 carries the post-translational modification Phosphoserine. Over residues 179-189 the composition is skewed to low complexity; sequence AAGASGASGPA. A JmjC domain is found at 341–480; it reads NPSTYLVGLR…NLLEKLMPIV (140 aa). Residues His-381, Asp-383, and His-446 each contribute to the Fe cation site.

This sequence belongs to the ROX family. NO66 subfamily. Fe(2+) serves as cofactor.

The protein localises to the nucleus. It carries out the reaction N(6),N(6)-dimethyl-L-lysyl(36)-[histone H3] + 2 2-oxoglutarate + 2 O2 = L-lysyl(36)-[histone H3] + 2 formaldehyde + 2 succinate + 2 CO2. Oxygenase that can act as both a histone lysine demethylase and a ribosomal histidine hydroxylase. Specifically demethylates 'Lys-4' (H3K4me) and 'Lys-36' (H3K36me) of histone H3, thereby playing a central role in histone code. This chain is Bifunctional lysine-specific demethylase and histidyl-hydroxylase NO66, found in Drosophila yakuba (Fruit fly).